A 423-amino-acid polypeptide reads, in one-letter code: Glutamine synthetase, chloroplastic (423 aa).

A chloroplast-targeting transit peptide spans 1–51 (MAQAVVPAMQCRVGVKAAAGRVWSAGRTRTGRGGASPGFKVMAVSTGSTGV). In terms of domain architecture, GS beta-grasp spans 70–150 (VIAEYIWVGG…VICDTYTPQG (81 aa)). The disordered stretch occupies residues 89 to 115 (RTISKPVEDPSELPKWNYDGSSTGQAP). The region spanning 154 to 423 (PTNKRHRAAQ…LAAKKLALKV (270 aa)) is the GS catalytic domain.

The protein belongs to the glutamine synthetase family. As to quaternary structure, homooctamer.

The protein localises to the plastid. The protein resides in the chloroplast. The enzyme catalyses L-glutamate + NH4(+) + ATP = L-glutamine + ADP + phosphate + H(+). The light-modulated chloroplast enzyme, encoded by a nuclear gene and expressed primarily in leaves, is responsible for the reassimilation of the ammonia generated by photorespiration. The sequence is that of Glutamine synthetase, chloroplastic (GLN2) from Zea mays (Maize).